The primary structure comprises 356 residues: Phosphatidylglycerol--prolipoprotein diacylglyceryl transferase (356 aa).

4 helical membrane-spanning segments follow: residues 24–44 (IKWY…LACV), 59–79 (WFVF…SFII), 103–123 (LAIE…FPLV), and 144–164 (VSMW…QIIG). Arginine 165 provides a ligand contact to a 1,2-diacyl-sn-glycero-3-phospho-(1'-sn-glycerol). 2 helical membrane-spanning segments follow: residues 209–229 (PFFL…YIGG) and 265–285 (FATS…LLVC).

This sequence belongs to the Lgt family.

The protein localises to the cell membrane. It carries out the reaction L-cysteinyl-[prolipoprotein] + a 1,2-diacyl-sn-glycero-3-phospho-(1'-sn-glycerol) = an S-1,2-diacyl-sn-glyceryl-L-cysteinyl-[prolipoprotein] + sn-glycerol 1-phosphate + H(+). It functions in the pathway protein modification; lipoprotein biosynthesis (diacylglyceryl transfer). Its function is as follows. Catalyzes the transfer of the diacylglyceryl group from phosphatidylglycerol to the sulfhydryl group of the N-terminal cysteine of a prolipoprotein, the first step in the formation of mature lipoproteins. In Malacoplasma penetrans (strain HF-2) (Mycoplasma penetrans), this protein is Phosphatidylglycerol--prolipoprotein diacylglyceryl transferase.